A 397-amino-acid chain; its full sequence is Acetate kinase 1 (397 aa).

Asn-8 provides a ligand contact to Mg(2+). ATP is bound at residue Lys-15. Arg-89 serves as a coordination point for substrate. The active-site Proton donor/acceptor is Asp-146. Residues 206-210 (HLGNG), 281-283 (DLR), and 329-333 (GIGEN) contribute to the ATP site. Glu-382 lines the Mg(2+) pocket.

Belongs to the acetokinase family. As to quaternary structure, homodimer. Mg(2+) is required as a cofactor. It depends on Mn(2+) as a cofactor.

The protein resides in the cytoplasm. It catalyses the reaction acetate + ATP = acetyl phosphate + ADP. It functions in the pathway metabolic intermediate biosynthesis; acetyl-CoA biosynthesis; acetyl-CoA from acetate: step 1/2. Its function is as follows. Catalyzes the formation of acetyl phosphate from acetate and ATP. Can also catalyze the reverse reaction. In Listeria monocytogenes serovar 1/2a (strain ATCC BAA-679 / EGD-e), this protein is Acetate kinase 1.